Here is a 332-residue protein sequence, read N- to C-terminus: Ribosomal RNA small subunit methyltransferase C (332 aa).

The protein belongs to the methyltransferase superfamily. RsmC family. Monomer.

It is found in the cytoplasm. The enzyme catalyses guanosine(1207) in 16S rRNA + S-adenosyl-L-methionine = N(2)-methylguanosine(1207) in 16S rRNA + S-adenosyl-L-homocysteine + H(+). Functionally, specifically methylates the guanine in position 1207 of 16S rRNA in the 30S particle. The protein is Ribosomal RNA small subunit methyltransferase C of Pseudomonas putida (strain GB-1).